Here is a 428-residue protein sequence, read N- to C-terminus: Histidine--tRNA ligase (428 aa).

It belongs to the class-II aminoacyl-tRNA synthetase family. In terms of assembly, homodimer.

Its subcellular location is the cytoplasm. It catalyses the reaction tRNA(His) + L-histidine + ATP = L-histidyl-tRNA(His) + AMP + diphosphate + H(+). In Lactobacillus delbrueckii subsp. bulgaricus (strain ATCC BAA-365 / Lb-18), this protein is Histidine--tRNA ligase.